Consider the following 253-residue polypeptide: Indole-3-glycerol phosphate synthase (253 aa).

The protein belongs to the TrpC family.

The enzyme catalyses 1-(2-carboxyphenylamino)-1-deoxy-D-ribulose 5-phosphate + H(+) = (1S,2R)-1-C-(indol-3-yl)glycerol 3-phosphate + CO2 + H2O. It functions in the pathway amino-acid biosynthesis; L-tryptophan biosynthesis; L-tryptophan from chorismate: step 4/5. This is Indole-3-glycerol phosphate synthase from Bacillus cereus (strain AH187).